The following is a 125-amino-acid chain: Photoactive yellow protein (125 aa).

Positions 23–86 (IDDLAFGAIQ…GRFREGVANG (64 aa)) constitute a PAS domain. Cys-69 carries the S-(4-hydroxycinnamyl)cysteine modification.

Belongs to the photoactive yellow protein family. In terms of processing, the 4-hydroxycinnamic acid (p-coumaric acid) chromophore is covalently bound via a thioester linkage.

In terms of biological role, this photoactive protein is a photoreceptor with kinetics similar to that of rhodopsin. The chain is Photoactive yellow protein (pyp) from Rhodothalassium salexigens (Rhodospirillum salexigens).